Consider the following 779-residue polypeptide: Phosphoribosylformylglycinamidine synthase subunit PurL (779 aa).

His-52 is a catalytic residue. ATP-binding residues include Tyr-55 and Lys-94. Glu-96 is a Mg(2+) binding site. Substrate contacts are provided by residues 97-100 and Arg-119; that span reads SHNH. Catalysis depends on His-98, which acts as the Proton acceptor. Residue Asp-120 participates in Mg(2+) binding. Gln-243 contributes to the substrate binding site. Residue Asp-271 participates in Mg(2+) binding. Residue 315–317 participates in substrate binding; it reads ESQ. ATP is bound by residues Asn-523 and Gly-560. Asn-561 lines the Mg(2+) pocket. Ser-563 is a substrate binding site.

This sequence belongs to the FGAMS family. As to quaternary structure, monomer. Part of the FGAM synthase complex composed of 1 PurL, 1 PurQ and 2 PurS subunits.

Its subcellular location is the cytoplasm. The enzyme catalyses N(2)-formyl-N(1)-(5-phospho-beta-D-ribosyl)glycinamide + L-glutamine + ATP + H2O = 2-formamido-N(1)-(5-O-phospho-beta-D-ribosyl)acetamidine + L-glutamate + ADP + phosphate + H(+). The protein operates within purine metabolism; IMP biosynthesis via de novo pathway; 5-amino-1-(5-phospho-D-ribosyl)imidazole from N(2)-formyl-N(1)-(5-phospho-D-ribosyl)glycinamide: step 1/2. In terms of biological role, part of the phosphoribosylformylglycinamidine synthase complex involved in the purines biosynthetic pathway. Catalyzes the ATP-dependent conversion of formylglycinamide ribonucleotide (FGAR) and glutamine to yield formylglycinamidine ribonucleotide (FGAM) and glutamate. The FGAM synthase complex is composed of three subunits. PurQ produces an ammonia molecule by converting glutamine to glutamate. PurL transfers the ammonia molecule to FGAR to form FGAM in an ATP-dependent manner. PurS interacts with PurQ and PurL and is thought to assist in the transfer of the ammonia molecule from PurQ to PurL. This is Phosphoribosylformylglycinamidine synthase subunit PurL from Prochlorococcus marinus (strain MIT 9312).